A 166-amino-acid chain; its full sequence is Nucleotide-binding protein CV_2047 (166 aa).

Belongs to the YajQ family.

Nucleotide-binding protein. This is Nucleotide-binding protein CV_2047 from Chromobacterium violaceum (strain ATCC 12472 / DSM 30191 / JCM 1249 / CCUG 213 / NBRC 12614 / NCIMB 9131 / NCTC 9757 / MK).